The following is a 277-amino-acid chain: Undecaprenyl-diphosphatase (277 aa).

Helical transmembrane passes span 53-73, 85-105, 108-128, 183-203, 215-235, and 250-270; these read LGAI…VILG, VNLL…ADLI, WLFN…VMLW, AATE…AAYS, GDLP…MLAV, and FAWY…LGVV.

The protein belongs to the UppP family.

The protein localises to the cell inner membrane. The catalysed reaction is di-trans,octa-cis-undecaprenyl diphosphate + H2O = di-trans,octa-cis-undecaprenyl phosphate + phosphate + H(+). Functionally, catalyzes the dephosphorylation of undecaprenyl diphosphate (UPP). Confers resistance to bacitracin. The chain is Undecaprenyl-diphosphatase from Azotobacter vinelandii (strain DJ / ATCC BAA-1303).